Reading from the N-terminus, the 334-residue chain is MAGWELLKLLLDDVQEHSTLIGKVWLTVLFIFRIFILSVAGESVWTDEQSDFICNTQQPGCTNVCYDQAFPISHVRYWVLQFLFVSTPTLIYLGHMVYLSKKEEKERQKENESRILVANEAQTEVHSSATKKIRIQGPLMCTYTTSVVFKSIFEAGFLLGQWYIYGFVMSPIFVCERIPCKHKVECFVSRPMEKTIFIIFMLVVSLISLLLNLMELIHLSFKCFQHGIKEGATCSPTGIPFNGAGNRMPPQEYTNPPSSNQDIDLPSYNKMSGGHNWSRIQMEQQVNGLVKPKCQCDCWSQSAISVVVSGAPGIISNMDAVKSNHQTSSKQQYV.

At 1–12 (MAGWELLKLLLD) the chain is on the cytoplasmic side. The helical transmembrane segment at 13–35 (DVQEHSTLIGKVWLTVLFIFRIF) threads the bilayer. Topologically, residues 36-75 (ILSVAGESVWTDEQSDFICNTQQPGCTNVCYDQAFPISHV) are extracellular. Residues 76 to 98 (RYWVLQFLFVSTPTLIYLGHMVY) form a helical membrane-spanning segment. Residues 99-153 (LSKKEEKERQKENESRILVANEAQTEVHSSATKKIRIQGPLMCTYTTSVVFKSIF) are Cytoplasmic-facing. Residues 154–176 (EAGFLLGQWYIYGFVMSPIFVCE) traverse the membrane as a helical segment. Over 177 to 207 (RIPCKHKVECFVSRPMEKTIFIIFMLVVSLI) the chain is Extracellular. Residues 208–230 (SLLLNLMELIHLSFKCFQHGIKE) form a helical membrane-spanning segment. At 231-334 (GATCSPTGIP…HQTSSKQQYV (104 aa)) the chain is on the cytoplasmic side.

The protein belongs to the connexin family. Alpha-type (group II) subfamily. A connexon is composed of a hexamer of connexins. Resides primarily in the ovary, oocytes and early embryos.

It is found in the cell membrane. The protein resides in the cell junction. The protein localises to the gap junction. In terms of biological role, one gap junction consists of a cluster of closely packed pairs of transmembrane channels, the connexons, through which materials of low MW diffuse from one cell to a neighboring cell. The sequence is that of Gap junction alpha-2 protein (gja2) from Xenopus laevis (African clawed frog).